The following is a 398-amino-acid chain: Lymphocyte transmembrane adapter 1 (398 aa).

At 1–37 the chain is on the extracellular side; sequence MDGVTPTLSTIRGRTLESSTLHVTPRSLDRNKDQITN. The chain crosses the membrane as a helical; Signal-anchor for type III membrane protein span at residues 38–58; that stretch reads IFSGFAGLLAILLVVAVFCIL. Over 59-398 the chain is Cytoplasmic; sequence WNWNKRKKRQ…GPGTQLLPDE (340 aa). Phosphotyrosine is present on Tyr-193. The segment at 228-261 is disordered; sequence TEERDEGCGDAGDCTSLYSPGAEDSDSLSNGEGS. 2 positions are modified to phosphotyrosine: Tyr-268 and Tyr-294. A disordered region spans residues 298–330; the sequence is PAADPSGSQQQAEKDVPSSNIGHVEDKTDDPGT. Polar residues predominate over residues 303–318; that stretch reads SGSQQQAEKDVPSSNI. A compositionally biased stretch (basic and acidic residues) spans 320 to 329; sequence HVEDKTDDPG. 2 positions are modified to phosphotyrosine: Tyr-345 and Tyr-373. The segment at 347–398 is disordered; it reads DFQPFTQSEDSQMKHREEMSNEDSSDYENVLTAKLGGRDSEQGPGTQLLPDE.

When phosphorylated, interacts with GRB2, PIK3R1 and GRAP2. In terms of processing, phosphorylated on tyrosines by Syk, Lck or ZAP70 upon TCR or BCR activation; which leads to the recruitment of GRB2, PIK3R1 and GRAP2. Expressed in spleen, thymus, and peripheral blood leukocytes. Expressed in several B-, T-, NK and monocyte cell lines.

It localises to the cell membrane. Negatively regulates TCR (T-cell antigen receptor)-mediated signaling in T-cells and BCR (B-cell antigen receptor)-mediated signaling in B-cells. The sequence is that of Lymphocyte transmembrane adapter 1 (LAX1) from Homo sapiens (Human).